The primary structure comprises 180 residues: Large ribosomal subunit protein uL5 (180 aa).

Belongs to the universal ribosomal protein uL5 family. As to quaternary structure, part of the 50S ribosomal subunit; part of the 5S rRNA/L5/L18/L25 subcomplex. Contacts the 5S rRNA and the P site tRNA. Forms a bridge to the 30S subunit in the 70S ribosome.

Functionally, this is one of the proteins that bind and probably mediate the attachment of the 5S RNA into the large ribosomal subunit, where it forms part of the central protuberance. In the 70S ribosome it contacts protein S13 of the 30S subunit (bridge B1b), connecting the 2 subunits; this bridge is implicated in subunit movement. Contacts the P site tRNA; the 5S rRNA and some of its associated proteins might help stabilize positioning of ribosome-bound tRNAs. This is Large ribosomal subunit protein uL5 from Brevibacillus brevis (strain 47 / JCM 6285 / NBRC 100599).